The chain runs to 214 residues: Phosphatidylserine decarboxylase proenzyme (214 aa).

Serine 182 serves as the catalytic Schiff-base intermediate with substrate; via pyruvic acid. Pyruvic acid (Ser); by autocatalysis is present on serine 182.

Belongs to the phosphatidylserine decarboxylase family. PSD-A subfamily. In terms of assembly, heterodimer of a large membrane-associated beta subunit and a small pyruvoyl-containing alpha subunit. Pyruvate serves as cofactor. Is synthesized initially as an inactive proenzyme. Formation of the active enzyme involves a self-maturation process in which the active site pyruvoyl group is generated from an internal serine residue via an autocatalytic post-translational modification. Two non-identical subunits are generated from the proenzyme in this reaction, and the pyruvate is formed at the N-terminus of the alpha chain, which is derived from the carboxyl end of the proenzyme. The post-translation cleavage follows an unusual pathway, termed non-hydrolytic serinolysis, in which the side chain hydroxyl group of the serine supplies its oxygen atom to form the C-terminus of the beta chain, while the remainder of the serine residue undergoes an oxidative deamination to produce ammonia and the pyruvoyl prosthetic group on the alpha chain.

It is found in the cell membrane. It catalyses the reaction a 1,2-diacyl-sn-glycero-3-phospho-L-serine + H(+) = a 1,2-diacyl-sn-glycero-3-phosphoethanolamine + CO2. It functions in the pathway phospholipid metabolism; phosphatidylethanolamine biosynthesis; phosphatidylethanolamine from CDP-diacylglycerol: step 2/2. Functionally, catalyzes the formation of phosphatidylethanolamine (PtdEtn) from phosphatidylserine (PtdSer). This Burkholderia cenocepacia (strain HI2424) protein is Phosphatidylserine decarboxylase proenzyme.